We begin with the raw amino-acid sequence, 207 residues long: Large ribosomal subunit protein uL4 (207 aa).

Residues 49–79 are disordered; the sequence is HKVKSRGEVSGGGKKPWRQKGTGRARAGTSR.

It belongs to the universal ribosomal protein uL4 family. In terms of assembly, part of the 50S ribosomal subunit.

Its function is as follows. One of the primary rRNA binding proteins, this protein initially binds near the 5'-end of the 23S rRNA. It is important during the early stages of 50S assembly. It makes multiple contacts with different domains of the 23S rRNA in the assembled 50S subunit and ribosome. Forms part of the polypeptide exit tunnel. This is Large ribosomal subunit protein uL4 from Heliobacterium modesticaldum (strain ATCC 51547 / Ice1).